A 585-amino-acid polypeptide reads, in one-letter code: Efflux pump dotC (585 aa).

Positions 1–34 are enriched in basic and acidic residues; sequence MSEDHTKADNLSEKDPHSPERSDSSSHEDAHARE. Residues 1 to 45 are disordered; sequence MSEDHTKADNLSEKDPHSPERSDSSSHEDAHAREEEESSDDDGAL. An N-linked (GlcNAc...) asparagine glycan is attached at Asn10. Over residues 35–44 the composition is skewed to acidic residues; sequence EEESSDDDGA. The chain crosses the membrane as a helical span at residues 51–71; it reads SLIAIVMIALSLIGLQLAVFL. Residue Asn91 is glycosylated (N-linked (GlcNAc...) asparagine). The next 13 membrane-spanning stretches (helical) occupy residues 94 to 114, 132 to 152, 158 to 178, 186 to 206, 214 to 234, 247 to 267, 280 to 300, 323 to 343, 353 to 373, 385 to 405, 414 to 434, 449 to 471, and 524 to 544; these read AAYT…TPIW, ALFM…MLIT, GAAG…LFSL, GMIG…GGAF, WCFY…FFFL, FAAI…MFLF, SATV…FGLV, ALLV…YLPL, PILA…SAAA, LIPM…LINF, LIIY…APLV, TATF…QVLY, and SPMW…ILLV. Residues 564-585 are disordered; sequence KKAEAERKAERQAKDLEKAQKS.

This sequence belongs to the major facilitator superfamily. TCR/Tet family.

The protein localises to the cell membrane. Its subcellular location is the vacuole membrane. Its function is as follows. Efflux pump; part of the gene cluster that mediates the biosynthesis of dothistromin (DOTH), a polyketide toxin very similar in structure to the aflatoxin precursor, versicolorin B. One function of dotC may be to transport early-stage dothistromin biosynthetic intermediates from the cytoplasm into vacuoles, thereby affecting the rate of dothistromin production. This Dothistroma septosporum (Red band needle blight fungus) protein is Efflux pump dotC.